The sequence spans 76 residues: Conotoxin VnMEKL-021 (76 aa).

The first 19 residues, 1–19 (MQKLTILLLVAAVLMSTQA), serve as a signal peptide directing secretion. Residues 20–37 (LIKGGGEKRPKEKIKFLS) constitute a propeptide that is removed on maturation. Cystine bridges form between cysteine 51–cysteine 65, cysteine 58–cysteine 69, and cysteine 64–cysteine 73.

The protein belongs to the conotoxin O2 superfamily. As to expression, expressed by the venom duct.

The protein localises to the secreted. The protein is Conotoxin VnMEKL-021 of Conus ventricosus (Mediterranean cone).